The chain runs to 320 residues: Thymidylate synthase (320 aa).

DUMP is bound by residues Arg-27 and 182 to 183 (RR). Residue Cys-202 is the Nucleophile of the active site. Residues 222–225 (RSAD), Asn-233, and 263–265 (HIY) each bind dUMP. (6R)-5,10-methylene-5,6,7,8-tetrahydrofolate is bound at residue Asp-225. Ala-319 lines the (6R)-5,10-methylene-5,6,7,8-tetrahydrofolate pocket.

Belongs to the thymidylate synthase family. Bacterial-type ThyA subfamily. Homodimer.

Its subcellular location is the cytoplasm. It carries out the reaction dUMP + (6R)-5,10-methylene-5,6,7,8-tetrahydrofolate = 7,8-dihydrofolate + dTMP. Its pathway is pyrimidine metabolism; dTTP biosynthesis. In terms of biological role, catalyzes the reductive methylation of 2'-deoxyuridine-5'-monophosphate (dUMP) to 2'-deoxythymidine-5'-monophosphate (dTMP) while utilizing 5,10-methylenetetrahydrofolate (mTHF) as the methyl donor and reductant in the reaction, yielding dihydrofolate (DHF) as a by-product. This enzymatic reaction provides an intracellular de novo source of dTMP, an essential precursor for DNA biosynthesis. The sequence is that of Thymidylate synthase from Limosilactobacillus reuteri (strain DSM 20016) (Lactobacillus reuteri).